A 209-amino-acid polypeptide reads, in one-letter code: Uracil phosphoribosyltransferase (209 aa).

5-phospho-alpha-D-ribose 1-diphosphate contacts are provided by residues Arg79, Arg104, and 131–139 (DPMLATGGS). Residues Ile194 and 199–201 (GDA) each bind uracil. Asp200 provides a ligand contact to 5-phospho-alpha-D-ribose 1-diphosphate.

The protein belongs to the UPRTase family. It depends on Mg(2+) as a cofactor.

It catalyses the reaction UMP + diphosphate = 5-phospho-alpha-D-ribose 1-diphosphate + uracil. Its pathway is pyrimidine metabolism; UMP biosynthesis via salvage pathway; UMP from uracil: step 1/1. With respect to regulation, allosterically activated by GTP. Functionally, catalyzes the conversion of uracil and 5-phospho-alpha-D-ribose 1-diphosphate (PRPP) to UMP and diphosphate. This is Uracil phosphoribosyltransferase from Streptococcus pyogenes serotype M49 (strain NZ131).